Here is a 317-residue protein sequence, read N- to C-terminus: Putative ribose-phosphate pyrophosphokinase (317 aa).

Residues 211-224 form a binding of phosphoribosylpyrophosphate region; that stretch reads GRDVIVLDDEIAKG.

The protein belongs to the ribose-phosphate pyrophosphokinase family.

The catalysed reaction is D-ribose 5-phosphate + ATP = 5-phospho-alpha-D-ribose 1-diphosphate + AMP + H(+). This Streptomyces coelicolor (strain ATCC BAA-471 / A3(2) / M145) protein is Putative ribose-phosphate pyrophosphokinase.